The primary structure comprises 396 residues: Purine ribonucleoside efflux pump NepI (396 aa).

Over 1–21 the chain is Cytoplasmic; the sequence is MSEFIAENRGADAITRPNWSA. Residues 22–42 form a helical membrane-spanning segment; the sequence is VFSVAFCVACLIIVEFLPVSL. Residues 43 to 54 are Periplasmic-facing; that stretch reads LTPMAQDLGISE. Residues 55–75 form a helical membrane-spanning segment; the sequence is GVAGQSVTVTAFVAMFASLFI. Over 76-85 the chain is Cytoplasmic; the sequence is TQTIQATDRR. A helical membrane pass occupies residues 86-106; it reads YVVILFAVLLTLSCLLVSFAN. Position 107 (Ser107) is a topological domain, periplasmic. The chain crosses the membrane as a helical span at residues 108–128; the sequence is FSLLLIGRACLGLALGGFWAM. At 129 to 147 the chain is on the cytoplasmic side; that stretch reads SASLTMRLVPPRTVPKALS. The helical transmembrane segment at 148–168 threads the bilayer; the sequence is VIFGAVSIALVIAAPLGSFLG. Residues 169–175 lie on the Periplasmic side of the membrane; sequence ELIGWRN. Residues 176 to 196 form a helical membrane-spanning segment; it reads VFNAAAAMGVLCIFWIIKSLP. The Cytoplasmic portion of the chain corresponds to 197–215; sequence SLPGEPSHQKQNTFRLLQR. The helical transmembrane segment at 216–236 threads the bilayer; it reads PGVMAGMIAIFMSFAGQFAFF. Residues 237-255 lie on the Periplasmic side of the membrane; the sequence is TYIRPVYMNLAGFGVDGLT. The chain crosses the membrane as a helical span at residues 256–276; that stretch reads LVLLSFGIASFVGTSLSSFIL. Topologically, residues 277–281 are cytoplasmic; the sequence is KRSVK. The chain crosses the membrane as a helical span at residues 282–302; it reads LALAGAPFVLALSALVLTLWG. The Periplasmic segment spans residues 303-305; the sequence is SDK. Residues 306 to 326 form a helical membrane-spanning segment; it reads IVATGVAIIWGLTFALIPVGW. The Cytoplasmic segment spans residues 327 to 343; the sequence is STWITRSLADQAEKAGS. A helical membrane pass occupies residues 344-364; it reads IQVAVIQLANTCGAAIGGYAL. The Periplasmic segment spans residues 365 to 366; it reads DN. Residues 367–387 form a helical membrane-spanning segment; that stretch reads IGLTSPLMLSGTLMLLTALLV. Topologically, residues 388–396 are cytoplasmic; it reads TAKVKMKKS.

Belongs to the major facilitator superfamily. DHA1 family. NepI (TC 2.A.1.2.26) subfamily.

Its subcellular location is the cell inner membrane. It carries out the reaction inosine(in) + H(+)(out) = inosine(out) + H(+)(in). It catalyses the reaction guanosine(in) + H(+)(out) = guanosine(out) + H(+)(in). In terms of biological role, involved in the efflux of purine ribonucleosides, such as inosine and guanosine. The chain is Purine ribonucleoside efflux pump NepI from Escherichia coli O1:K1 / APEC.